We begin with the raw amino-acid sequence, 1374 residues long: Ribonuclease 3 (1374 aa).

3 disordered regions span residues 1-95, 130-406, and 452-497; these read MMQG…PLPP, PPVP…EEEE, and LGSR…SSSS. Residues 59-68 are compositionally biased toward polar residues; the sequence is PSTTFSNSPA. Composition is skewed to pro residues over residues 70-95 and 145-160; these read NFLP…PLPP and MMPP…PPVM. Positions 182–202 are enriched in low complexity; sequence FNSFQNNPSSFLPSANNSSSP. Basic and acidic residues-rich tracts occupy residues 216-289 and 298-313; these read PSER…ERER and RRSP…EYKR. 2 positions are modified to phosphoserine: serine 355 and serine 373. Basic and acidic residues predominate over residues 364-399; it reads RWEEEKDRWSDNQSSGKDKNYTSIKEKEPEETMPDK. A necessary for interaction with DGCR8 and pri-miRNA processing activity region spans residues 390–1365; that stretch reads KEPEETMPDK…RWEREHQERE (976 aa). Residues 475–491 are compositionally biased toward acidic residues; the sequence is EDLESSSESECESDEDS. Positions 536, 538, 549, 561, 609, 676, and 680 each coordinate Zn(2+). 2 consecutive RNase III domains span residues 876-1056 and 1107-1233; these read LMHL…LEGS and LTEF…IDKD. Glutamate 969 is a Mg(2+) binding site. Histidine 1026 contributes to the Zn(2+) binding site. 5 residues coordinate Mg(2+): asparagine 1042, glutamate 1045, glutamate 1147, aspartate 1219, and glutamate 1222. Residues 1260-1334 form the DRBM domain; that stretch reads DPKSQLQQCC…AMDALEKYNF (75 aa).

It belongs to the ribonuclease III family. In terms of assembly, component of the microprocessor complex, or pri-miRNA processing protein complex, which is composed of DROSHA and DGCR8. The microprocessor complex is a heterotrimer; each of the two DROSHA RNase III domains binds one DGCR8 (via C-terminal region). Interacts with SP1 and SNIP1. Interacts with SRRT/ARS2. Interacts with CPSF3 and ISY1; this interaction is in an RNA dependent manner. Interacts with PUS10; interaction promotes pri-miRNAs processing. Mg(2+) is required as a cofactor. Requires Mn(2+) as cofactor. Degraded by autophagy in response to neuronal activity in motor neurons. As to expression, ubiquitous.

The protein localises to the nucleus. Its subcellular location is the nucleolus. The protein resides in the cytoplasm. It carries out the reaction Endonucleolytic cleavage to 5'-phosphomonoester.. Its function is as follows. Ribonuclease III double-stranded (ds) RNA-specific endoribonuclease that is involved in the initial step of microRNA (miRNA) biogenesis. Component of the microprocessor complex that is required to process primary miRNA transcripts (pri-miRNAs) to release precursor miRNA (pre-miRNA) in the nucleus. Within the microprocessor complex, DROSHA cleaves the 3' and 5' strands of a stem-loop in pri-miRNAs (processing center 11 bp from the dsRNA-ssRNA junction) to release hairpin-shaped pre-miRNAs that are subsequently cut by the cytoplasmic DICER to generate mature miRNAs. Involved also in pre-rRNA processing. Cleaves double-strand RNA and does not cleave single-strand RNA. Involved in the formation of GW bodies. Plays a role in growth homeostasis in response to autophagy in motor neurons. In Homo sapiens (Human), this protein is Ribonuclease 3 (DROSHA).